The primary structure comprises 173 residues: Co-chaperone protein HscB homolog (173 aa).

The 73-residue stretch at Asn-3–Leu-75 folds into the J domain.

Belongs to the HscB family. As to quaternary structure, interacts with HscA and stimulates its ATPase activity.

Co-chaperone involved in the maturation of iron-sulfur cluster-containing proteins. Seems to help targeting proteins to be folded toward HscA. The protein is Co-chaperone protein HscB homolog of Mannheimia succiniciproducens (strain KCTC 0769BP / MBEL55E).